Consider the following 31-residue polypeptide: Photosystem II reaction center protein Psb30 (31 aa).

The helical transmembrane segment at 5–25 (IQLTSLLLIVIAGPLVIALLF) threads the bilayer.

Belongs to the Psb30/Ycf12 family. PSII is composed of 1 copy each of membrane proteins PsbA, PsbB, PsbC, PsbD, PsbE, PsbF, PsbH, PsbI, PsbJ, PsbK, PsbL, PsbM, PsbT, PsbX, PsbY, PsbZ, Psb30/Ycf12, peripheral proteins of the oxygen-evolving complex and a large number of cofactors. It forms dimeric complexes.

The protein localises to the plastid. It is found in the chloroplast thylakoid membrane. Functionally, a core subunit of photosystem II (PSII), probably helps stabilize the reaction center. This Phacus acuminatus protein is Photosystem II reaction center protein Psb30.